A 312-amino-acid chain; its full sequence is Olfactory receptor 6N1 (312 aa).

The Extracellular portion of the chain corresponds to 1–25 (MDTGNWSQVAEFIILGFPHLQGVQI). N-linked (GlcNAc...) asparagine glycosylation occurs at Asn-5. The chain crosses the membrane as a helical span at residues 26-46 (YLFLLLLLIYLMTVLGNLLIF). At 47-54 (LVVCLDSR) the chain is on the cytoplasmic side. Residues 55–75 (LHTPMYHFVSILSFSELGYTA) form a helical membrane-spanning segment. Over 76–99 (ATIPKMLANLLSEKKTISFSGCLL) the chain is Extracellular. Cysteines 97 and 189 form a disulfide. A helical transmembrane segment spans residues 100–120 (QIYFFHSLGATECYLLTAMAY). The Cytoplasmic segment spans residues 121–139 (DRYLAICRPLHYPTLMTPT). A helical transmembrane segment spans residues 140–160 (LCAEIAIGCWLGGLAGPVVEI). The Extracellular portion of the chain corresponds to 161-197 (SLISRLPFCGPNRIQHVFCDFPPVLSLACTDTSINVL). The helical transmembrane segment at 198-217 (VDFVINSCKILATFLLILCS) threads the bilayer. Over 218–237 (YVQIICTVLRIPSAAGKRKA) the chain is Cytoplasmic. Residues 238 to 258 (ISTCASHFTVVLIFYGSILSM) form a helical membrane-spanning segment. The Extracellular portion of the chain corresponds to 259 to 271 (YVQLKKSYSLDYD). A helical transmembrane segment spans residues 272-292 (QALAVVYSVLTPFLNPFIYSL). At 293 to 312 (RNKEIKEAVRRQLKRIGILA) the chain is on the cytoplasmic side.

It belongs to the G-protein coupled receptor 1 family.

Its subcellular location is the cell membrane. In terms of biological role, odorant receptor. The protein is Olfactory receptor 6N1 (OR6N1) of Homo sapiens (Human).